Reading from the N-terminus, the 251-residue chain is Triosephosphate isomerase 1 (251 aa).

9 to 11 (NWK) contacts substrate. His95 serves as the catalytic Electrophile. The Proton acceptor role is filled by Glu167. Substrate contacts are provided by residues Gly173, Ser213, and 234 to 235 (GG).

The protein belongs to the triosephosphate isomerase family. In terms of assembly, homodimer.

It localises to the cytoplasm. The catalysed reaction is D-glyceraldehyde 3-phosphate = dihydroxyacetone phosphate. It functions in the pathway carbohydrate biosynthesis; gluconeogenesis. The protein operates within carbohydrate degradation; glycolysis; D-glyceraldehyde 3-phosphate from glycerone phosphate: step 1/1. Involved in the gluconeogenesis. Catalyzes stereospecifically the conversion of dihydroxyacetone phosphate (DHAP) to D-glyceraldehyde-3-phosphate (G3P). The polypeptide is Triosephosphate isomerase 1 (Listeria monocytogenes serovar 1/2a (strain ATCC BAA-679 / EGD-e)).